We begin with the raw amino-acid sequence, 249 residues long: Type III pantothenate kinase (249 aa).

Position 6–13 (6–13) interacts with ATP; the sequence is DCGNSLIK. Substrate is bound by residues Y93 and 100–103; that span reads GLDR. The active-site Proton acceptor is the D102. Position 122 (D122) interacts with K(+). T125 is a binding site for ATP. A substrate-binding site is contributed by T181.

Belongs to the type III pantothenate kinase family. As to quaternary structure, homodimer. NH4(+) is required as a cofactor. It depends on K(+) as a cofactor.

The protein localises to the cytoplasm. The enzyme catalyses (R)-pantothenate + ATP = (R)-4'-phosphopantothenate + ADP + H(+). The protein operates within cofactor biosynthesis; coenzyme A biosynthesis; CoA from (R)-pantothenate: step 1/5. Its function is as follows. Catalyzes the phosphorylation of pantothenate (Pan), the first step in CoA biosynthesis. The polypeptide is Type III pantothenate kinase (Pseudomonas paraeruginosa (strain DSM 24068 / PA7) (Pseudomonas aeruginosa (strain PA7))).